A 210-amino-acid polypeptide reads, in one-letter code: Guanylate kinase (210 aa).

The region spanning glycine 6–arginine 186 is the Guanylate kinase-like domain. Serine 13–threonine 20 lines the ATP pocket.

Belongs to the guanylate kinase family.

Its subcellular location is the cytoplasm. It carries out the reaction GMP + ATP = GDP + ADP. Its function is as follows. Essential for recycling GMP and indirectly, cGMP. The polypeptide is Guanylate kinase (Anaplasma phagocytophilum (strain HZ)).